Here is a 398-residue protein sequence, read N- to C-terminus: Heat-inducible transcription repressor HrcA (398 aa).

Belongs to the HrcA family.

In terms of biological role, negative regulator of class I heat shock genes (grpE-dnaK-dnaJ and groELS operons). Prevents heat-shock induction of these operons. The protein is Heat-inducible transcription repressor HrcA of Chlamydia pneumoniae (Chlamydophila pneumoniae).